The following is a 190-amino-acid chain: GTP cyclohydrolase 1 (190 aa).

Zn(2+) is bound by residues C79, H82, and C151.

This sequence belongs to the GTP cyclohydrolase I family. In terms of assembly, toroid-shaped homodecamer, composed of two pentamers of five dimers.

It carries out the reaction GTP + H2O = 7,8-dihydroneopterin 3'-triphosphate + formate + H(+). Its pathway is cofactor biosynthesis; 7,8-dihydroneopterin triphosphate biosynthesis; 7,8-dihydroneopterin triphosphate from GTP: step 1/1. This is GTP cyclohydrolase 1 from Clostridioides difficile (strain 630) (Peptoclostridium difficile).